The primary structure comprises 296 residues: SHSP domain-containing protein CPUR_05420 (296 aa).

A disordered region spans residues 50–83 (AWQTCPQQRHPHQPDVSGPPGSGFGEQPSQDTPN). Residues 169-296 (ETKKSFTPDI…GKGVKEITIV (128 aa)) form the sHSP domain.

This sequence belongs to the small heat shock protein (HSP20) family.

Functionally, monooxygenase; part of the ergochrome gene cluster responsible for the typical purple-black color of the ergot sclerotia. The ergochrome gene cluster produces several ergot pigments including the yellow ergochrome secalonic acid and its derivatives, as well as the red anthraquinones endocrocin and clavorubin. The pathway begins with the synthesis of atrochrysone thioester by the polyketide synthase (PKS) CPUR_05437. The atrochrysone carboxyl ACP thioesterase CPUR_05436 then breaks the thioester bond and releases the atrochrysone carboxylic acid from CPUR_05437. The atrochrysone carboxylic acid is then converted to atrochrysone which is further transformed into emodin anthrone. The next step is performed by the anthrone oxygenase CPUR_05434 that catalyzes the oxidation of emodinanthrone to emodin. Emodin is further modified to yield monodictyphenone via several steps involving CPUR_05427, CPUR_05428, CPUR_05429 and CPUR_05430. The short chain dehydrogenase/reductase CPUR_05418 then catalyzes the C-5 ketoreduction to give the xanthone skeleton of the monomeric units. Ergochromes formation requires further dimerization steps of different xanthone units, probably catalyzed by the cytochrome P450 monooxygenase CPUR_05419. CPUR_05425, CPUR_05426 and CPUR_05431 are unique to Claviceps, thus it is likely that they are involved in further modification of xanthone units or in their dimerization. The yellow ergochromes and the red anthraquinone pigments endocrocin and clavorubin are products from the same PKS derived precursors and the latter are likely shunt products in the pathway of xanthone biosynthesis. It is proposed that atrochrysone carboxylic acid released from the PKS CPUR_05437 can also be converted to endocrocin anthrone which is further oxidized into endocrocin by CPUR_05435. Endocrocin could be then modified to clavorubin, possibly by CPUR_05423 and CPUR_05431. Clavorubin is the principal anthraquinone metabolite produced by the cluster with a much higher yield compared to endocrocin. This Claviceps purpurea (strain 20.1) (Ergot fungus) protein is SHSP domain-containing protein CPUR_05420.